We begin with the raw amino-acid sequence, 1335 residues long: Membrane-associated phosphatidylinositol transfer protein 2 (1335 aa).

2 disordered regions span residues 32–51 (ETHG…YTDG) and 262–341 (EEGP…SEEE). A compositionally biased stretch (polar residues) spans 275 to 286 (KDQASGTTSDPG). The span at 299 to 319 (KQWSTSSKSSRSSKRGASPSR) shows a compositional bias: low complexity. Serine 334, serine 338, serine 365, and serine 586 each carry phosphoserine. Positions 606–657 (HCSGGSGGGGSGGSSLESSRHLSRSNIDIPRSNGTEDSRRQLPRKRSDSSTY) are disordered. Gly residues predominate over residues 609 to 618 (GGSGGGGSGG). Serine 630 bears the Phosphoserine mark. Over residues 639–653 (GTEDSRRQLPRKRSD) the composition is skewed to basic and acidic residues. Serine 686, serine 687, and serine 688 each carry phosphoserine. The DDHD domain maps to 701-949 (FDFEIADLFL…VSFLLRQVMR (249 aa)). Residue arginine 814 is modified to Omega-N-methylarginine. Positions 861 to 880 (ALPPPSPTTQGPRARARQVS) are disordered. Serine 1263 bears the Phosphoserine mark. The interval 1282-1313 (TISAQPSGPSHRHDRTQTQMDSEQRGQRSMSV) is disordered. Positions 1298–1313 (QTQMDSEQRGQRSMSV) are enriched in polar residues.

This sequence belongs to the PtdIns transfer protein family. PI transfer class IIA subfamily. Interacts with CPNE4 (via VWFA domain). Interacts with PTK2B via its C-terminus. In terms of tissue distribution, detected in retina and in the dentate gyrus of the cerebellum.

Its subcellular location is the endomembrane system. The protein resides in the cytoplasm. The protein localises to the cytoskeleton. In terms of biological role, catalyzes the transfer of phosphatidylinositol and phosphatidylcholine between membranes (in vitro). Binds calcium ions. This is Membrane-associated phosphatidylinositol transfer protein 2 (Pitpnm2) from Mus musculus (Mouse).